A 4351-amino-acid chain; its full sequence is Protocadherin Fat 2 (4351 aa).

Positions 1 to 18 (MTLVLLGVAMVLLHRAAC) are cleaved as a signal peptide. Over 19-4050 (EKPLEETITP…IKRGDWGQQE (4032 aa)) the chain is Extracellular. Cadherin domains lie at 34 to 148 (THSL…KPLF) and 149 to 256 (SPPS…PPVI). Residues Asn-39, Asn-210, Asn-280, and Asn-330 are each glycosylated (N-linked (GlcNAc...) asparagine). Cadherin domains lie at 363–458 (EKAV…APVF), 459–564 (NRSS…QPMF), 565–669 (EEVN…VPVQ), 716–820 (DHFP…PPRF), 821–925 (PPGG…PPQC), 926–1032 (ITEH…SPHF), 1033–1142 (SSFV…RPVF), 1138–1242 (SRPV…SPMF), 1243–1346 (SHKL…SSIP), 1350–1448 (DESH…RPQF), 1449–1555 (LQDH…SPHF), 1556–1660 (TQPR…APIF), 1661–1758 (SKDE…APAF), 1759–1872 (LKST…PPRF), 1873–1968 (SEQI…SLQF), 1969–2070 (DQDI…IPEF), 2071–2171 (QHLP…NPLF), 2172–2272 (QSPY…PPTF), 2273–2379 (SQLV…PPEF), 2380–2481 (REPQ…SPEF), 2482–2585 (QQNV…APQF), 2586–2692 (KASG…LPKF), 2693–2799 (SEPL…RPVF), 2800–2908 (EADP…PPRF), 2909–3013 (ASED…SPQC), 3014–3115 (SQLL…APRF), 3116–3220 (FPSH…LPIF), 3221–3323 (LNSE…HPRF), 3324–3428 (THDL…PPRF), 3429–3533 (FQLN…PPST), and 3534–3631 (LPLE…APQQ). Residues Asn-459, Asn-568, Asn-627, and Asn-789 are each glycosylated (N-linked (GlcNAc...) asparagine). Asn-996 carries an N-linked (GlcNAc...) asparagine glycan. N-linked (GlcNAc...) asparagine glycans are attached at residues Asn-1175, Asn-1276, and Asn-1417. Residues Asn-1899, Asn-1998, Asn-2007, Asn-2102, Asn-2165, Asn-2183, Asn-2325, Asn-2368, Asn-2387, Asn-2430, Asn-2470, Asn-2547, and Asn-2597 are each glycosylated (N-linked (GlcNAc...) asparagine). Asn-3127, Asn-3278, and Asn-3312 each carry an N-linked (GlcNAc...) asparagine glycan. 8 N-linked (GlcNAc...) asparagine glycosylation sites follow: Asn-3432, Asn-3603, Asn-3770, Asn-3774, Asn-3815, Asn-3842, Asn-3875, and Asn-3906. A Laminin G-like domain is found at 3775–3946 (GTTWRFSGQS…YLETWALSQC (172 aa)). 4 disulfide bridges follow: Cys-3914–Cys-3946, Cys-3953–Cys-3964, Cys-3958–Cys-3974, and Cys-3976–Cys-3985. EGF-like domains are found at residues 3949–3986 (PGTT…RNCE) and 3988–4024 (GREN…DRCE). N-linked (GlcNAc...) asparagine glycosylation is present at Asn-3991. Cystine bridges form between Cys-3992/Cys-4003, Cys-3997/Cys-4012, and Cys-4014/Cys-4023. Residues 4051–4071 (FLVIIVALPLLIIATVGLLLY) traverse the membrane as a helical segment. The Cytoplasmic portion of the chain corresponds to 4072–4351 (CRRCKSHKPV…DYGSCEEVMF (280 aa)). The segment at 4313 to 4340 (DCEVNGGPAPGRSQPRAPPNYEGSDMVE) is disordered.

As to quaternary structure, homodimer.

The protein localises to the cell membrane. It is found in the cell junction. Its subcellular location is the golgi apparatus. It localises to the trans-Golgi network. Functionally, involved in the regulation of cell migration. May be involved in mediating the organization of the parallel fibers of granule cells during cerebellar development. This chain is Protocadherin Fat 2 (Fat2), found in Mus musculus (Mouse).